Here is a 107-residue protein sequence, read N- to C-terminus: UPF0060 membrane protein PSHAa1175 (107 aa).

The next 4 membrane-spanning stretches (helical) occupy residues 3–23 (IFGLFLITALAEIIGCYLPYL), 30–50 (SVWLLVPAALSLAIFAWLLSL), 60–80 (AAYGGVYIFMAILWLWAVDGI), and 84–104 (TWDLVGSGVALVGMAIIMFAP).

The protein belongs to the UPF0060 family.

The protein localises to the cell inner membrane. The protein is UPF0060 membrane protein PSHAa1175 of Pseudoalteromonas translucida (strain TAC 125).